The chain runs to 95 residues: Co-chaperonin GroES (95 aa).

The protein belongs to the GroES chaperonin family. In terms of assembly, heptamer of 7 subunits arranged in a ring. Interacts with the chaperonin GroEL.

The protein localises to the cytoplasm. Together with the chaperonin GroEL, plays an essential role in assisting protein folding. The GroEL-GroES system forms a nano-cage that allows encapsulation of the non-native substrate proteins and provides a physical environment optimized to promote and accelerate protein folding. GroES binds to the apical surface of the GroEL ring, thereby capping the opening of the GroEL channel. This chain is Co-chaperonin GroES, found in Oleidesulfovibrio alaskensis (strain ATCC BAA-1058 / DSM 17464 / G20) (Desulfovibrio alaskensis).